The following is a 653-amino-acid chain: Translation factor GUF1, mitochondrial (653 aa).

A tr-type G domain is found at 56 to 236 (ENYRNFSIVA…SIIKNIPAPN (181 aa)). GTP contacts are provided by residues 65–72 (AHVDHGKS), 129–133 (DTPGH), and 183–186 (NKID).

This sequence belongs to the TRAFAC class translation factor GTPase superfamily. Classic translation factor GTPase family. LepA subfamily.

The protein localises to the mitochondrion inner membrane. It catalyses the reaction GTP + H2O = GDP + phosphate + H(+). Its function is as follows. Promotes mitochondrial protein synthesis. May act as a fidelity factor of the translation reaction, by catalyzing a one-codon backward translocation of tRNAs on improperly translocated ribosomes. Binds to mitochondrial ribosomes in a GTP-dependent manner. The chain is Translation factor GUF1, mitochondrial from Candida tropicalis (strain ATCC MYA-3404 / T1) (Yeast).